A 92-amino-acid polypeptide reads, in one-letter code: Large ribosomal subunit protein eL43 (92 aa).

Residues Cys-39, Cys-42, Cys-57, and Cys-60 each coordinate Zn(2+). Residues 39–60 form a C4-type zinc finger; it reads CPVCGFPKLKRASTSIWVCGKC.

It belongs to the eukaryotic ribosomal protein eL43 family. Putative zinc-binding subfamily. In terms of assembly, part of the 50S ribosomal subunit. Requires Zn(2+) as cofactor.

Binds to the 23S rRNA. The sequence is that of Large ribosomal subunit protein eL43 from Methanocaldococcus jannaschii (strain ATCC 43067 / DSM 2661 / JAL-1 / JCM 10045 / NBRC 100440) (Methanococcus jannaschii).